Consider the following 376-residue polypeptide: Mitogen-activated protein kinase ERK-A (376 aa).

Positions 38–326 (YIKLAYIGEG…VEEALAHPYL (289 aa)) constitute a Protein kinase domain. ATP contacts are provided by residues 44-52 (IGEGAYGMV) and K67. Catalysis depends on D162, which acts as the Proton acceptor. Residue T198 is modified to Phosphothreonine. Positions 198–200 (TEY) match the TXY motif. Y200 is modified (phosphotyrosine).

Belongs to the protein kinase superfamily. CMGC Ser/Thr protein kinase family. MAP kinase subfamily. It depends on Mg(2+) as a cofactor. Dually phosphorylated on Thr-198 and Tyr-200, which activates the enzyme. Phosphorylated on tyrosine residue(s) in response to insulin. In third instar larvae, expressed in eye imaginal disks. In adults, expressed in head and body.

The protein resides in the cytoplasm. Its subcellular location is the nucleus. The enzyme catalyses L-seryl-[protein] + ATP = O-phospho-L-seryl-[protein] + ADP + H(+). The catalysed reaction is L-threonyl-[protein] + ATP = O-phospho-L-threonyl-[protein] + ADP + H(+). With respect to regulation, activated by tyrosine and threonine phosphorylation. Its function is as follows. Serine/threonine kinase which acts as an essential component of the MAP kinase signal transduction pathway to regulate proliferation, differentiation and effect cell fate decisions in various tissues. Required downstream of phl/Raf in the sev/sevenless, tor/torso, and EGF receptor homolog Egfr signal transduction pathways. Required for embryonic epithelial tissue repair. During larval development, mediates Ptth/tor signaling leading to the production of ecdysone, a hormone required for the initiation of metamorphosis. The chain is Mitogen-activated protein kinase ERK-A from Drosophila melanogaster (Fruit fly).